The primary structure comprises 451 residues: tRNA-2-methylthio-N(6)-dimethylallyladenosine synthase (451 aa).

Positions 3 to 120 (LKLHIKTYGC…LPEMINHVRI (118 aa)) constitute an MTTase N-terminal domain. [4Fe-4S] cluster contacts are provided by Cys12, Cys49, Cys83, Cys157, Cys161, and Cys164. The Radical SAM core domain maps to 143–375 (QAKGPTAFVS…QECIRKQAMK (233 aa)). One can recognise a TRAM domain in the interval 378 to 441 (QAMKGTVQCI…SNSLRGELIS (64 aa)).

Belongs to the methylthiotransferase family. MiaB subfamily. In terms of assembly, monomer. The cofactor is [4Fe-4S] cluster.

The protein resides in the cytoplasm. It catalyses the reaction N(6)-dimethylallyladenosine(37) in tRNA + (sulfur carrier)-SH + AH2 + 2 S-adenosyl-L-methionine = 2-methylsulfanyl-N(6)-dimethylallyladenosine(37) in tRNA + (sulfur carrier)-H + 5'-deoxyadenosine + L-methionine + A + S-adenosyl-L-homocysteine + 2 H(+). Its function is as follows. Catalyzes the methylthiolation of N6-(dimethylallyl)adenosine (i(6)A), leading to the formation of 2-methylthio-N6-(dimethylallyl)adenosine (ms(2)i(6)A) at position 37 in tRNAs that read codons beginning with uridine. This is tRNA-2-methylthio-N(6)-dimethylallyladenosine synthase from Baumannia cicadellinicola subsp. Homalodisca coagulata.